The following is a 109-amino-acid chain: Nascent polypeptide-associated complex protein (109 aa).

One can recognise an NAC-A/B domain in the interval 3–70 (PMNPKQMKKM…YEVVKRPPKI (68 aa)).

It belongs to the NAC-alpha family. In terms of assembly, homodimer. Interacts with the ribosome. Binds ribosomal RNA.

In terms of biological role, contacts the emerging nascent chain on the ribosome. The protein is Nascent polypeptide-associated complex protein of Archaeoglobus fulgidus (strain ATCC 49558 / DSM 4304 / JCM 9628 / NBRC 100126 / VC-16).